Reading from the N-terminus, the 458-residue chain is Kelch repeat and BTB domain-containing protein 13 (458 aa).

Residues 7-74 (TLVQVWVGGQ…LRGDRPALAA (68 aa)) form the BTB domain. Kelch repeat units follow at residues 159–209 (AVST…TLGN), 210–258 (KLYI…GFDG), 259–305 (RLYA…QACG), 307–350 (LFVC…VAHR), and 352–400 (SLYV…VVRG).

As to quaternary structure, component of the BCR(KBTBD13) E3 ubiquitin ligase complex, at least composed of CUL3 and KBTBD13 and RBX1. Interacts with CUL3. Post-translationally, autoubiquitinated. Expressed in skeletal muscle.

The protein resides in the cytoplasm. It participates in protein modification; protein ubiquitination. Substrate-specific adapter of a BCR (BTB-CUL3-RBX1) E3 ubiquitin ligase complex. This chain is Kelch repeat and BTB domain-containing protein 13 (KBTBD13), found in Homo sapiens (Human).